Consider the following 187-residue polypeptide: uncharacterized protein (187 aa).

The signal sequence occupies residues Met1–Val17. Cys18 carries the N-palmitoyl cysteine lipid modification. Cys18 carries the S-diacylglycerol cysteine lipid modification.

It localises to the cell membrane. This is an uncharacterized protein from Treponema pallidum (strain Nichols).